The following is a 247-amino-acid chain: Geranylgeranylglyceryl phosphate synthase (247 aa).

Mg(2+) contacts are provided by Asp-23 and Ser-52. Residues 171-177 (YLEAGSG), 203-204 (GG), and 225-226 (GT) contribute to the sn-glycerol 1-phosphate site.

This sequence belongs to the GGGP/HepGP synthase family. Group II subfamily. Requires Mg(2+) as cofactor.

The protein resides in the cytoplasm. The catalysed reaction is sn-glycerol 1-phosphate + (2E,6E,10E)-geranylgeranyl diphosphate = sn-3-O-(geranylgeranyl)glycerol 1-phosphate + diphosphate. It functions in the pathway membrane lipid metabolism; glycerophospholipid metabolism. Prenyltransferase that catalyzes the transfer of the geranylgeranyl moiety of geranylgeranyl diphosphate (GGPP) to the C3 hydroxyl of sn-glycerol-1-phosphate (G1P). This reaction is the first ether-bond-formation step in the biosynthesis of archaeal membrane lipids. The chain is Geranylgeranylglyceryl phosphate synthase from Methanosarcina barkeri (strain Fusaro / DSM 804).